The sequence spans 601 residues: Glutathione-regulated potassium-efflux system protein KefB (601 aa).

Transmembrane regions (helical) follow at residues 4–24, 29–49, 55–75, 87–107, 115–135, 152–172, 177–197, 207–227, 230–250, 268–288, 291–311, 324–344, and 356–376; these read SDFLLAGVLFLFAAVAAVPLA, IGAVLGYLLAGIAIGPWGLGF, EILHFSELGVVFLMFIIGLEL, IFGVGAAQVLLSSALLAGLLM, AAVVGGIGLAMSSTAMALQLM, VLLFQDLAVIPALALVPLLAG, HFDWMKIGMKVLAFVGMLIGG, FIAASGVREVFTAATLLLVLG, LFMDALGLSMALGTFIAGVLL, GLLLGLFFISVGMSLNLGVLY, LLWVVISVVVLVAVKILVLYL, MQFAGVLSQGGEFAFVLFSTA, and ALLLVTVTLSMMTTPLLMKLV. Residues 400–519 form the RCK N-terminal domain; it reads KPQVIVVGFG…AGVTQFSRET (120 aa).

The protein belongs to the monovalent cation:proton antiporter 2 (CPA2) transporter (TC 2.A.37) family. KefB subfamily. In terms of assembly, interacts with the regulatory subunit KefG.

It is found in the cell inner membrane. Its function is as follows. Pore-forming subunit of a potassium efflux system that confers protection against electrophiles. Catalyzes K(+)/H(+) antiport. The polypeptide is Glutathione-regulated potassium-efflux system protein KefB (Escherichia coli O81 (strain ED1a)).